Consider the following 427-residue polypeptide: Enolase (427 aa).

(2R)-2-phosphoglycerate is bound at residue Gln163. The active-site Proton donor is Glu205. Mg(2+) is bound by residues Asp242, Glu285, and Asp312. (2R)-2-phosphoglycerate contacts are provided by Lys337, Arg366, Ser367, and Lys388. Lys337 serves as the catalytic Proton acceptor.

It belongs to the enolase family. Mg(2+) is required as a cofactor.

It is found in the cytoplasm. Its subcellular location is the secreted. The protein resides in the cell surface. The catalysed reaction is (2R)-2-phosphoglycerate = phosphoenolpyruvate + H2O. Its pathway is carbohydrate degradation; glycolysis; pyruvate from D-glyceraldehyde 3-phosphate: step 4/5. Functionally, catalyzes the reversible conversion of 2-phosphoglycerate (2-PG) into phosphoenolpyruvate (PEP). It is essential for the degradation of carbohydrates via glycolysis. This is Enolase from Nitrosospira multiformis (strain ATCC 25196 / NCIMB 11849 / C 71).